We begin with the raw amino-acid sequence, 381 residues long: Putative F-box/kelch-repeat protein At3g17570 (381 aa).

The 45-residue stretch at 1-45 (MFTDLPRDLETEILSRVPATSLQKLKPTCKRWYTLFKDPEFLKKH) folds into the F-box domain. Kelch repeat units lie at residues 151 to 199 (SYKI…TLKG), 229 to 281 (LLYQ…KIVE), and 331 to 379 (RFYI…GGKR).

This chain is Putative F-box/kelch-repeat protein At3g17570, found in Arabidopsis thaliana (Mouse-ear cress).